Consider the following 430-residue polypeptide: Adenylosuccinate synthetase (430 aa).

Residues 12-18 (GDEGKGK) and 40-42 (GHT) contribute to the GTP site. D13 functions as the Proton acceptor in the catalytic mechanism. Mg(2+) is bound by residues D13 and G40. Residues 13–16 (DEGK), 38–41 (NAGH), T128, R142, Q223, T238, and R302 contribute to the IMP site. The Proton donor role is filled by H41. Substrate is bound at residue 298 to 304 (TTTGRPR). Residues R304, 330 to 332 (LLD), and 412 to 414 (SVG) contribute to the GTP site.

This sequence belongs to the adenylosuccinate synthetase family. In terms of assembly, homodimer. Mg(2+) serves as cofactor.

It localises to the cytoplasm. It catalyses the reaction IMP + L-aspartate + GTP = N(6)-(1,2-dicarboxyethyl)-AMP + GDP + phosphate + 2 H(+). The protein operates within purine metabolism; AMP biosynthesis via de novo pathway; AMP from IMP: step 1/2. Its function is as follows. Plays an important role in the de novo pathway of purine nucleotide biosynthesis. Catalyzes the first committed step in the biosynthesis of AMP from IMP. The protein is Adenylosuccinate synthetase of Listeria monocytogenes serovar 1/2a (strain ATCC BAA-679 / EGD-e).